The following is a 257-amino-acid chain: uncharacterized protein (257 aa).

The chain crosses the membrane as a helical span at residues 7-27 (LMLGICLVLLIILIVGYVIMT).

The protein belongs to the staphylococcal tandem lipoprotein family.

Its subcellular location is the cell membrane. This is an uncharacterized protein from Staphylococcus aureus (strain Mu50 / ATCC 700699).